The following is a 255-amino-acid chain: Homeobox protein DLX-1 (255 aa).

The span at 1 to 14 (MTMTTMPESLNSPV) shows a compositional bias: polar residues. 2 disordered regions span residues 1–38 (MTMT…MSHG) and 95–118 (SLAQ…EGGE). The segment covering 25–36 (PPNQQMSPSPMS) has biased composition (low complexity). The segment covering 100–112 (RLEDPGADSEKST) has biased composition (basic and acidic residues). Residues 128–187 (IRKPRTIYSSLQLQALNRRFQQTQYLALPERAELAASLGLTQTQVKIWFQNKRSKFKKLM) constitute a DNA-binding region (homeobox). Positions 204-230 (ALSAGSPPVPPGWNPNSSSGKGSGGNA) are disordered.

This sequence belongs to the distal-less homeobox family. As to quaternary structure, interacts with SMAD4 (via homeobox DNA-binding domain). Interacts (via homeobox DNA-binding domain) with POU4F2; this interaction suppresses DLX1-mediated transcriptional activity in postnatal retina and enhances retinal ganglion cell (RGC) differentiation. Expressed in hematopoietic cell lines.

It is found in the nucleus. Functionally, plays a role as a transcriptional activator or repressor. Inhibits several cytokine signaling pathways, such as TGFB1, activin-A/INHBA and BMP4 by interfering with the transcriptional stimulatory activity of transcription factors, such as MSX2, FAST2, SMAD2 and SMAD3 during hematopoietic cell differentiation. Plays a role in terminal differentiation of interneurons, such as amacrine and bipolar cells in the developing retina. Likely to play a regulatory role in the development of the ventral forebrain. May play a role in craniofacial patterning and morphogenesis and may be involved in the early development of diencephalic subdivisions. The chain is Homeobox protein DLX-1 (DLX1) from Homo sapiens (Human).